The sequence spans 541 residues: Tyrosine-protein kinase Yes (541 aa).

Basic and acidic residues predominate over residues 1 to 10; sequence MGCIKSKENK. Residues 1–29 form a disordered region; the sequence is MGCIKSKENKSPAIKYTPENPTEPVNTSA. G2 carries N-myristoyl glycine lipidation. The S-palmitoyl cysteine; in membrane form moiety is linked to residue C3. Over residues 19–29 the composition is skewed to polar residues; that stretch reads ENPTEPVNTSA. Y32 carries the phosphotyrosine modification. The 62-residue stretch at 89-150 folds into the SH3 domain; it reads GGVTIFVALY…PSNYVAPADS (62 aa). Residues 156–253 enclose the SH2 domain; that stretch reads WYFGKMGRKD…GLCHKLTTVC (98 aa). In terms of domain architecture, Protein kinase spans 275–528; it reads LRLEVKLGQG…YIQSFLEDYF (254 aa). ATP-binding positions include 281–289 and K303; that span reads LGQGCFGEV. 2 positions are modified to phosphotyrosine: Y334 and Y343. The active-site Proton acceptor is D394. Residue Y424 is modified to Phosphotyrosine; by autocatalysis. Position 535 is a phosphotyrosine (Y535).

As to quaternary structure, interacts with YAP1 and CSF1R. Interacts with FASLG. Interacts with CTNND1; this interaction allows YES1-mediated activation of FYN and FER and subsequent phosphorylation of CTNND1. Interacts with IL6ST/gp130. Interacts with SCRIB, when YES1 is in a closed conformation; the interaction facilitates YES1 autophosphorylation. Post-translationally, phosphorylated. Phosphorylation by CSK on the C-terminal tail maintains the enzyme in an inactive state. Autophosphorylation at Tyr-424 maintains enzyme activity by blocking CSK-mediated inhibition. In terms of processing, palmitoylation at Cys-3 promotes membrane localization.

Its subcellular location is the cell membrane. The protein resides in the cytoplasm. The protein localises to the cytoskeleton. It localises to the microtubule organizing center. It is found in the centrosome. Its subcellular location is the cytosol. The protein resides in the cell junction. The catalysed reaction is L-tyrosyl-[protein] + ATP = O-phospho-L-tyrosyl-[protein] + ADP + H(+). Functionally, non-receptor protein tyrosine kinase that is involved in the regulation of cell growth and survival, apoptosis, cell-cell adhesion, cytoskeleton remodeling, and differentiation. Stimulation by receptor tyrosine kinases (RTKs) including EGFR, PDGFR, CSF1R and FGFR leads to recruitment of YES1 to the phosphorylated receptor, and activation and phosphorylation of downstream substrates. Upon EGFR activation, promotes the phosphorylation of PARD3 to favor epithelial tight junction assembly. Participates in the phosphorylation of specific junctional components such as CTNND1 by stimulating the FYN and FER tyrosine kinases at cell-cell contacts. Upon T-cell stimulation by CXCL12, phosphorylates collapsin response mediator protein 2/DPYSL2 and induces T-cell migration. Participates in CD95L/FASLG signaling pathway and mediates AKT-mediated cell migration. Plays a role in cell cycle progression by phosphorylating the cyclin dependent kinase 4/CDK4 thus regulating the G1 phase. Also involved in G2/M progression and cytokinesis. Catalyzes phosphorylation of organic cation transporter OCT2 which induces its transport activity. The protein is Tyrosine-protein kinase Yes (Yes1) of Rattus norvegicus (Rat).